Here is a 133-residue protein sequence, read N- to C-terminus: Ribonucleases P/MRP protein subunit POP8 (133 aa).

In terms of assembly, component of nuclear RNase P and RNase MRP complexes. RNase P consists of an RNA moiety and at least 9 protein subunits including POP1, POP3, POP4, POP5, POP6, POP7, POP8, RPP1 and RPR2. RNase MRP complex consists of an RNA moiety and at least 10 protein subunits including POP1, POP3, POP4, POP5, POP6, POP7, POP8, RMP1, RPP1 and SNM1, many of which are shared with the RNase P complex.

Its subcellular location is the nucleus. The enzyme catalyses Endonucleolytic cleavage of RNA, removing 5'-extranucleotides from tRNA precursor.. Its function is as follows. Component of ribonuclease P, a protein complex that generates mature tRNA molecules by cleaving their 5'-ends. Also a component of RNase MRP, which cleaves pre-rRNA sequences. This Saccharomyces cerevisiae (strain ATCC 204508 / S288c) (Baker's yeast) protein is Ribonucleases P/MRP protein subunit POP8 (POP8).